Consider the following 363-residue polypeptide: UDP-N-acetylglucosamine--N-acetylmuramyl-(pentapeptide) pyrophosphoryl-undecaprenol N-acetylglucosamine transferase (363 aa).

UDP-N-acetyl-alpha-D-glucosamine-binding positions include 14 to 16 (TGG), arginine 171, serine 200, and glutamine 290.

The protein belongs to the glycosyltransferase 28 family. MurG subfamily.

It localises to the cell inner membrane. It carries out the reaction di-trans,octa-cis-undecaprenyl diphospho-N-acetyl-alpha-D-muramoyl-L-alanyl-D-glutamyl-meso-2,6-diaminopimeloyl-D-alanyl-D-alanine + UDP-N-acetyl-alpha-D-glucosamine = di-trans,octa-cis-undecaprenyl diphospho-[N-acetyl-alpha-D-glucosaminyl-(1-&gt;4)]-N-acetyl-alpha-D-muramoyl-L-alanyl-D-glutamyl-meso-2,6-diaminopimeloyl-D-alanyl-D-alanine + UDP + H(+). Its pathway is cell wall biogenesis; peptidoglycan biosynthesis. Functionally, cell wall formation. Catalyzes the transfer of a GlcNAc subunit on undecaprenyl-pyrophosphoryl-MurNAc-pentapeptide (lipid intermediate I) to form undecaprenyl-pyrophosphoryl-MurNAc-(pentapeptide)GlcNAc (lipid intermediate II). The polypeptide is UDP-N-acetylglucosamine--N-acetylmuramyl-(pentapeptide) pyrophosphoryl-undecaprenol N-acetylglucosamine transferase (Borreliella burgdorferi (strain ATCC 35210 / DSM 4680 / CIP 102532 / B31) (Borrelia burgdorferi)).